The following is a 721-amino-acid chain: Sodium/hydrogen exchanger 6 (721 aa).

The segment at 1-44 is disordered; that stretch reads MTSPKPWARSAGSCQTQRAVRTRKKECREEGESDTEKGPAASSA. Residues 26-37 show a composition bias toward basic and acidic residues; sequence ECREEGESDTEK. Helical transmembrane passes span 91–111, 123–143, 196–216, 231–251, 272–292, 298–318, 344–364, 388–412, 434–454, 456–476, 499–519, and 535–555; these read SANLLIFILLLTLTILTIWLF, GLAMIYGLLVGLVLRYGIHVP, VTFDPEVFFNILLPPIIFYAG, ILAYAFLGTAISCFVIGSIMY, CLLFGAIVSATDPVTVLAIFH, VELYALLFGESVLNDAVAIVL, IGIFLGIFSGSFAMGAATGVV, MSWSTFLLAEAWGFTGVVAVLFCGI, FELLNFLAENFIFSYMGLTLF, FQNHVFNPTFVVGAFIAIFLG, NFQHMMMFAGLRGAMAFALAI, and LLIVFFTVWVFGGGTTAMLSC.

This sequence belongs to the monovalent cation:proton antiporter 1 (CPA1) transporter (TC 2.A.36) family. As to quaternary structure, homodimer. Interacts with RACK1; regulates the distribution of SLC9A6 between endosomes and the plasma membrane. Ubiquitinated (in vitro). In terms of processing, glycosylated.

It is found in the endosome membrane. The protein resides in the recycling endosome membrane. Its subcellular location is the early endosome membrane. The protein localises to the late endosome membrane. It localises to the cell membrane. It catalyses the reaction Na(+)(in) + H(+)(out) = Na(+)(out) + H(+)(in). It carries out the reaction K(+)(in) + H(+)(out) = K(+)(out) + H(+)(in). Endosomal Na(+), K(+)/H(+) antiporter. Mediates the electroneutral exchange of endosomal luminal H(+) for a cytosolic Na(+) or K(+). By facilitating proton efflux, SLC9A6 counteracts the acidity generated by vacuolar (V)-ATPase, thereby limiting luminal acidification. Responsible for alkalizing and maintaining the endosomal pH, and consequently in, e.g., endosome maturation and trafficking of recycling endosomal cargo. Plays a critical role during neurodevelopment by regulating synaptic development and plasticity. Implicated in the maintenance of cell polarity in a manner that is dependent on its ability to modulate intravesicular pH. Regulates intracelular pH in some specialized cells, osteoclasts and stereocilia where this transporter localizes to the plasma membrane. This chain is Sodium/hydrogen exchanger 6, found in Rattus norvegicus (Rat).